We begin with the raw amino-acid sequence, 272 residues long: Glutamate racemase (272 aa).

Residues aspartate 16–serine 17 and tyrosine 48–glycine 49 contribute to the substrate site. Residue cysteine 79 is the Proton donor/acceptor of the active site. Asparagine 80–threonine 81 contributes to the substrate binding site. Catalysis depends on cysteine 191, which acts as the Proton donor/acceptor. A substrate-binding site is contributed by threonine 192 to histidine 193.

It belongs to the aspartate/glutamate racemases family.

It catalyses the reaction L-glutamate = D-glutamate. The protein operates within cell wall biogenesis; peptidoglycan biosynthesis. Its function is as follows. Provides the (R)-glutamate required for cell wall biosynthesis. The sequence is that of Glutamate racemase from Chlorobaculum tepidum (strain ATCC 49652 / DSM 12025 / NBRC 103806 / TLS) (Chlorobium tepidum).